We begin with the raw amino-acid sequence, 173 residues long: Small ribosomal subunit protein uS5 (173 aa).

The region spanning 17-80 (WQERVIQIRR…ADGKKQLIEV (64 aa)) is the S5 DRBM domain.

This sequence belongs to the universal ribosomal protein uS5 family. In terms of assembly, part of the 30S ribosomal subunit. Contacts proteins S4 and S8.

Functionally, with S4 and S12 plays an important role in translational accuracy. In terms of biological role, located at the back of the 30S subunit body where it stabilizes the conformation of the head with respect to the body. The polypeptide is Small ribosomal subunit protein uS5 (Gloeothece citriformis (strain PCC 7424) (Cyanothece sp. (strain PCC 7424))).